The following is a 122-amino-acid chain: MIQPQTRLNVADNSGARELMCIRIIGASNRRYAHIGDIIVAVIKEALPSTSLERSEVVRAVIVRTCKELKCDDGIIIRYDDNAAVVIDQEGNPKGTRVFGAIAHELRELSFTKIVSLAPEVL.

Belongs to the universal ribosomal protein uL14 family. As to quaternary structure, part of the 50S ribosomal subunit.

It is found in the plastid. The protein resides in the chloroplast. Functionally, binds to 23S rRNA. The polypeptide is Large ribosomal subunit protein uL14c (Oenothera biennis (German evening primrose)).